The primary structure comprises 1007 residues: Kinesin-like protein KIN-14F (1007 aa).

The 147-residue stretch at Ala41–Asp187 folds into the Calponin-homology (CH) domain. The Kinesin motor domain maps to Ser390–Val715. Gly472 to Thr479 is a binding site for ATP. Positions Gly718–Ser748 form a coiled coil. Residues Lys885 to Arg904 are compositionally biased toward basic and acidic residues. Disordered regions lie at residues Lys885–Asp924 and Ser944–Lys1007. Residues Thr963–Gly1001 show a composition bias toward polar residues.

Belongs to the TRAFAC class myosin-kinesin ATPase superfamily. Kinesin family. KIN-14 subfamily.

This Oryza sativa subsp. japonica (Rice) protein is Kinesin-like protein KIN-14F.